We begin with the raw amino-acid sequence, 502 residues long: ATP synthase subunit alpha (502 aa).

Residue 169-176 coordinates ATP; it reads GDRQTGKT.

Belongs to the ATPase alpha/beta chains family. As to quaternary structure, F-type ATPases have 2 components, CF(1) - the catalytic core - and CF(0) - the membrane proton channel. CF(1) has five subunits: alpha(3), beta(3), gamma(1), delta(1), epsilon(1). CF(0) has three main subunits: a(1), b(2) and c(9-12). The alpha and beta chains form an alternating ring which encloses part of the gamma chain. CF(1) is attached to CF(0) by a central stalk formed by the gamma and epsilon chains, while a peripheral stalk is formed by the delta and b chains.

It is found in the cell membrane. The catalysed reaction is ATP + H2O + 4 H(+)(in) = ADP + phosphate + 5 H(+)(out). Its function is as follows. Produces ATP from ADP in the presence of a proton gradient across the membrane. The alpha chain is a regulatory subunit. This Exiguobacterium sibiricum (strain DSM 17290 / CCUG 55495 / CIP 109462 / JCM 13490 / 255-15) protein is ATP synthase subunit alpha.